The chain runs to 360 residues: Mannose-1-phosphate guanylyltransferase catalytic subunit beta (360 aa).

Positions 2 to 222 (KALILVGGYG…QGFWMDIGQP (221 aa)) are substrate-binding domain. Residue Asp-110 participates in GDP-alpha-D-mannose binding. Residue Asp-110 participates in Mg(2+) binding. Lys-162 is an active-site residue. Residue Asp-218 participates in GDP-alpha-D-mannose binding. Asp-218 is a binding site for Mg(2+). Residues 245-360 (HVGPGFIGNV…ESVPEPRIIM (116 aa)) form a hexapeptide repeat domain region.

Belongs to the transferase hexapeptide repeat family. In terms of assembly, component of the GMPPA-GMPPB mannose-1-phosphate guanylyltransferase complex composed of 4 gmppa subunits and 8 gmppb subunits; the complex is organized into three layers, a central layer made up of 2 gmppa dimers sandwiched between two layers each made up of 2 gmppb dimers. Catalytic activity of gmppb is reduced when part of the complex and binding of GDP-alpha-D-Mannose by gmppa induces allosteric feedback inhibition of gmppb. Requires Mg(2+) as cofactor.

The catalysed reaction is alpha-D-mannose 1-phosphate + GTP + H(+) = GDP-alpha-D-mannose + diphosphate. The protein operates within nucleotide-sugar biosynthesis; GDP-alpha-D-mannose biosynthesis; GDP-alpha-D-mannose from alpha-D-mannose 1-phosphate (GTP route): step 1/1. Its activity is regulated as follows. Enzyme activity is reduced by incorporation into the GMPPA-GMPPB mannose-1-phosphate guanylyltransferase complex. Allosterically inhibited, when part of the GMPPA-GMPPB complex, by GDP-alpha-D-mannose binding to GMPPA. Catalytic subunit of the GMPPA-GMPPB mannose-1-phosphate guanylyltransferase complex. Catalyzes the formation of GDP-mannose, an essential precursor of glycan moieties of glycoproteins and glycolipids. Can catalyze the reverse reaction in vitro. Together with GMPPA regulates GDP-alpha-D-mannose levels. The chain is Mannose-1-phosphate guanylyltransferase catalytic subunit beta (gmppb) from Xenopus tropicalis (Western clawed frog).